Consider the following 340-residue polypeptide: Mitochondrial glycine transporter (340 aa).

Solcar repeat units lie at residues 23–108 (PKTL…ARNG), 128–218 (LSPF…FKND), and 237–325 (RSTI…LIKS). Transmembrane regions (helical) follow at residues 29 to 54 (LISGASAGLISAISLQPFDLLKTRLQ), 83 to 109 (GALPSTLRTSVGAGLYFTILSSARNGI), 134 to 159 (LATGFIVRAVVGIITMPITIVKTRYE), 193 to 216 (GSFATLARDCPYAGMYVLFYELFK), 241 to 267 (INTSAAILAASVSTTITAPFDAIKTRL), and 300 to 318 (GLSLRFGRKGLSSGISWCI).

It belongs to the mitochondrial carrier (TC 2.A.29) family. SLC25A38 subfamily.

It is found in the mitochondrion inner membrane. It carries out the reaction glycine(in) = glycine(out). Its function is as follows. Mitochondrial glycine transporter that imports glycine into the mitochondrial matrix. Plays an important role in providing glycine for the first enzymatic step in heme biosynthesis, the condensation of glycine with succinyl-CoA to produce 5-aminolevulinate (ALA) in the mitochondrial matrix. This chain is Mitochondrial glycine transporter, found in Debaryomyces hansenii (strain ATCC 36239 / CBS 767 / BCRC 21394 / JCM 1990 / NBRC 0083 / IGC 2968) (Yeast).